The chain runs to 162 residues: Deoxyuridine 5'-triphosphate nucleotidohydrolase (162 aa).

A Phosphoserine modification is found at serine 11. Residues 83 to 85 (RSG), 97 to 103 (GVIDEDY), glycine 108, arginine 151, and 156 to 157 (FG) contribute to the dUTP site.

The protein belongs to the dUTPase family. Homotrimer. The cofactor is Mg(2+). In terms of processing, phosphorylated in vivo on Ser-11, a reaction that can be catalyzed in vitro by CDC2.

Its subcellular location is the nucleus. The enzyme catalyses dUTP + H2O = dUMP + diphosphate + H(+). Its pathway is pyrimidine metabolism; dUMP biosynthesis; dUMP from dCTP (dUTP route): step 2/2. Its function is as follows. Catalyzes the cleavage of 2'-deoxyuridine 5'-triphosphate (dUTP) into 2'-deoxyuridine 5'-monophosphate (dUMP) and inorganic pyrophosphate and through its action efficiently prevents uracil misincorporation into DNA and at the same time provides dUMP, the substrate for de novo thymidylate biosynthesis. Inhibits peroxisome proliferator-activated receptor (PPAR) activity by binding of its N-terminal to PPAR, preventing the latter's dimerization with retinoid X receptor. Essential for embryonic development. The chain is Deoxyuridine 5'-triphosphate nucleotidohydrolase (Dut) from Mus musculus (Mouse).